Here is a 493-residue protein sequence, read N- to C-terminus: Mitochondrial distribution and morphology protein 10 (493 aa).

This sequence belongs to the MDM10 family. In terms of assembly, component of the ER-mitochondria encounter structure (ERMES) or MDM complex, composed of MMM1, MDM10, MDM12 and MDM34. Associates with the mitochondrial outer membrane sorting assembly machinery SAM(core) complex, which consists of SAM35, SAM37 and SAM50, to form a SAM(holo) complex.

It localises to the mitochondrion outer membrane. In terms of biological role, component of the ERMES/MDM complex, which serves as a molecular tether to connect the endoplasmic reticulum and mitochondria. Components of this complex are involved in the control of mitochondrial shape and protein biogenesis and may function in phospholipid exchange. MDM10 is involved in the late assembly steps of the general translocase of the mitochondrial outer membrane (TOM complex). Functions in the TOM40-specific route of the assembly of outer membrane beta-barrel proteins, including the association of TOM40 with the receptor TOM22 and small TOM proteins. Can associate with the SAM(core) complex as well as the MDM12-MMM1 complex, both involved in late steps of the major beta-barrel assembly pathway, that is responsible for biogenesis of all outer membrane beta-barrel proteins. May act as a switch that shuttles between both complexes and channels precursor proteins into the TOM40-specific pathway. Plays a role in mitochondrial morphology and in the inheritance of mitochondria. The chain is Mitochondrial distribution and morphology protein 10 from Saccharomyces cerevisiae (strain ATCC 204508 / S288c) (Baker's yeast).